We begin with the raw amino-acid sequence, 143 residues long: Large ribosomal subunit protein mL51 (143 aa).

Residues 1 to 52 constitute a mitochondrion transit peptide; that stretch reads MAALVRGLMRRVAALPQAVRSVSGGGQRHEPYRPLPITSPLAGLPRNFRVRE.

Belongs to the mitochondrion-specific ribosomal protein mL51 family. Component of the mitochondrial ribosome large subunit (39S) which comprises a 16S rRNA and about 50 distinct proteins.

The protein resides in the mitochondrion. The protein is Large ribosomal subunit protein mL51 (MRPL51) of Gallus gallus (Chicken).